Reading from the N-terminus, the 139-residue chain is Maximins 4/H3 type 5 (139 aa).

A signal peptide spans 1–18 (MNFKYIFAVSFLIASAYA). A propeptide spanning residues 19–43 (RSVQNDEQSLSQRDVLEEESLREIR) is cleaved from the precursor. The residue at position 70 (Asn-70) is an Asparagine amide. A propeptide spanning residues 74-118 (TAEEHEVMKRLEAVMRDLDSLDHPEEASERETRGFNQDEIAKEKR) is cleaved from the precursor. Ile-138 is modified (isoleucine amide).

This sequence belongs to the bombinin family. Expressed by the skin glands.

It is found in the secreted. Its function is as follows. Maximin-4 shows antibacterial activity against both Gram-positive and Gram-negative bacteria. It also shows antimicrobial activity against the fungus C.albicans, but not against A.flavus nor P.uticale. It has little hemolytic activity. It does not possess a significant cytotoxicity against tumor cell lines. It does not possess a significant anti-HIV activity. In terms of biological role, maximin-H3 shows antibacterial activity against both Gram-positive and Gram-negative bacteria. It also shows antimicrobial activity against the fungus C.albicans. Shows strong hemolytic activity. This is Maximins 4/H3 type 5 from Bombina maxima (Giant fire-bellied toad).